A 750-amino-acid polypeptide reads, in one-letter code: Methylmalonyl-CoA mutase, mitochondrial (750 aa).

Residues 1 to 32 constitute a mitochondrion transit peptide; sequence MLRAKNQLFLLSPHYLRQVKESSGSRLIQQRL. Position 50 (Gln50) interacts with malonyl-CoA. Residue Lys89 is modified to N6-acetyllysine. Malonyl-CoA is bound by residues 96–99 and 106–110; these read YPTM and TIRQY. Lys212 is modified (N6-acetyllysine). Residues 216 to 218, Arg228, Lys255, His265, and 304 to 306 each bind malonyl-CoA; these read TIQ and RLS. Residue Lys335 is modified to N6-acetyllysine. The residue at position 343 (Lys343) is an N6-succinyllysine. Ser481 is subject to Phosphoserine. An N6-succinyllysine modification is found at Lys595. The residue at position 602 (Lys602) is an N6-acetyllysine. The B12-binding domain maps to 614–746; that stretch reads RPRLLVAKMG…DDIEKCLEKK (133 aa). Residue His627 participates in adenosylcob(III)alamin binding.

Belongs to the methylmalonyl-CoA mutase family. As to quaternary structure, homodimer. Interacts (the apoenzyme form) with MMAA; the interaction is GTP dependent. Adenosylcob(III)alamin serves as cofactor.

Its subcellular location is the mitochondrion matrix. It is found in the mitochondrion. The protein localises to the cytoplasm. It carries out the reaction (R)-methylmalonyl-CoA = succinyl-CoA. With respect to regulation, inhibited by itaconyl-CoA, a metabolite that inactivates the coenzyme B12 cofactor. Functionally, catalyzes the reversible isomerization of methylmalonyl-CoA (MMCoA) (generated from branched-chain amino acid metabolism and degradation of dietary odd chain fatty acids and cholesterol) to succinyl-CoA (3-carboxypropionyl-CoA), a key intermediate of the tricarboxylic acid cycle. The chain is Methylmalonyl-CoA mutase, mitochondrial (MMUT) from Bos taurus (Bovine).